We begin with the raw amino-acid sequence, 113 residues long: Iron-sulfur cluster insertion protein ErpA (113 aa).

3 residues coordinate iron-sulfur cluster: cysteine 41, cysteine 105, and cysteine 107.

Belongs to the HesB/IscA family. As to quaternary structure, homodimer. It depends on iron-sulfur cluster as a cofactor.

Required for insertion of 4Fe-4S clusters for at least IspG. The sequence is that of Iron-sulfur cluster insertion protein ErpA from Aliivibrio fischeri (strain ATCC 700601 / ES114) (Vibrio fischeri).